The primary structure comprises 354 residues: NADH-quinone oxidoreductase subunit H (354 aa).

Helical transmembrane passes span 12 to 32, 62 to 82, 89 to 109, 124 to 144, 162 to 182, 203 to 223, 239 to 259, 263 to 283, 291 to 311, and 326 to 346; these read LLGGFWPVVWNLIKIVALIAP, PWGLLTPIADAVKLIFKEIIL, GLFLLGPVMTIMPALAAWVVV, LLFLMAITSMEVYGVIIAGWA, VSYEIAMGFALVVVLMVSGTL, FLSWNWLPLFPIFIVYFISGL, EIVAGHMIEYSGMAFAMFFLA, NMILISALAVTMFLGGWLPPI, IPGWIWLGLKTFVVVTMFLWV, and LGWKIFIPITLIWLVVVGLWI.

The protein belongs to the complex I subunit 1 family. NDH-1 is composed of 14 different subunits. Subunits NuoA, H, J, K, L, M, N constitute the membrane sector of the complex.

It localises to the cell inner membrane. It carries out the reaction a quinone + NADH + 5 H(+)(in) = a quinol + NAD(+) + 4 H(+)(out). Functionally, NDH-1 shuttles electrons from NADH, via FMN and iron-sulfur (Fe-S) centers, to quinones in the respiratory chain. The immediate electron acceptor for the enzyme in this species is believed to be ubiquinone. Couples the redox reaction to proton translocation (for every two electrons transferred, four hydrogen ions are translocated across the cytoplasmic membrane), and thus conserves the redox energy in a proton gradient. This subunit may bind ubiquinone. The polypeptide is NADH-quinone oxidoreductase subunit H (Methylibium petroleiphilum (strain ATCC BAA-1232 / LMG 22953 / PM1)).